The sequence spans 216 residues: V-type ATP synthase subunit D (216 aa).

Belongs to the V-ATPase D subunit family.

Its function is as follows. Produces ATP from ADP in the presence of a proton gradient across the membrane. The sequence is that of V-type ATP synthase subunit D from Clostridium novyi (strain NT).